Consider the following 585-residue polypeptide: ATP-dependent lipid A-core flippase (585 aa).

5 consecutive transmembrane segments (helical) span residues 16 to 36 (LWPYISFYKAGLSVAVVALII), 66 to 86 (FLSMMPYYLVGLMILRGASGF), 156 to 176 (IIGLMALMFWNSWQLSAILLV), 252 to 272 (AIANPVIQVIASFALVVVLVL), and 278 to 298 (LRAELTPGTFAVVFGAMFGLM). The region spanning 29 to 313 (VAVVALIINA…LTNVTSQFQR (285 aa)) is the ABC transmembrane type-1 domain. The region spanning 345-581 (IQVKNVTFTY…DGAYAQLHRI (237 aa)) is the ABC transporter domain. Residue 379-386 (GRSGSGKS) participates in ATP binding.

The protein belongs to the ABC transporter superfamily. Lipid exporter (TC 3.A.1.106) family. Homodimer.

It localises to the cell inner membrane. The catalysed reaction is ATP + H2O + lipid A-core oligosaccharideSide 1 = ADP + phosphate + lipid A-core oligosaccharideSide 2.. Involved in lipopolysaccharide (LPS) biosynthesis. Translocates lipid A-core from the inner to the outer leaflet of the inner membrane. Transmembrane domains (TMD) form a pore in the inner membrane and the ATP-binding domain (NBD) is responsible for energy generation. The protein is ATP-dependent lipid A-core flippase of Photobacterium profundum (strain SS9).